We begin with the raw amino-acid sequence, 199 residues long: ATP synthase subunit b (199 aa).

Residues 5–25 (SFVTTLSVCVMILGLAALGFA) form a helical membrane-spanning segment.

The protein belongs to the ATPase B chain family. In terms of assembly, F-type ATPases have 2 components, F(1) - the catalytic core - and F(0) - the membrane proton channel. F(1) has five subunits: alpha(3), beta(3), gamma(1), delta(1), epsilon(1). F(0) has three main subunits: a(1), b(2) and c(10-14). The alpha and beta chains form an alternating ring which encloses part of the gamma chain. F(1) is attached to F(0) by a central stalk formed by the gamma and epsilon chains, while a peripheral stalk is formed by the delta and b chains.

The protein resides in the cell inner membrane. Its function is as follows. F(1)F(0) ATP synthase produces ATP from ADP in the presence of a proton or sodium gradient. F-type ATPases consist of two structural domains, F(1) containing the extramembraneous catalytic core and F(0) containing the membrane proton channel, linked together by a central stalk and a peripheral stalk. During catalysis, ATP synthesis in the catalytic domain of F(1) is coupled via a rotary mechanism of the central stalk subunits to proton translocation. Functionally, component of the F(0) channel, it forms part of the peripheral stalk, linking F(1) to F(0). This is ATP synthase subunit b from Citrifermentans bemidjiense (strain ATCC BAA-1014 / DSM 16622 / JCM 12645 / Bem) (Geobacter bemidjiensis).